Reading from the N-terminus, the 272-residue chain is Protein SSO0103 (272 aa).

This sequence belongs to the CinA family.

In Saccharolobus solfataricus (strain ATCC 35092 / DSM 1617 / JCM 11322 / P2) (Sulfolobus solfataricus), this protein is Protein SSO0103.